The following is a 364-amino-acid chain: Nucleosome assembly protein 1;2 (364 aa).

Positions 32–86 (VESIKNTLQGLAARHTDVLESLEPKVRKRVEVLREIQSQHDDLEAKFFEERAALE) form a coiled coil. The Nuclear export signal motif lies at 53 to 68 (LEPKVRKRVEVLREIQ). The short motif at 227–232 (KKKPKK) is the Nuclear localization signal element. Disordered stretches follow at residues 250–269 (FNFFSPPQVPDDDEEIDEDT) and 301–364 (GEAA…CKQQ). 2 stretches are compositionally biased toward acidic residues: residues 259–269 (PDDDEEIDEDT) and 304–340 (AQDEDFEGIMDDEDDDDEDDDDDEDEDDEGDDEDDED). Residue Cys361 is modified to Cysteine methyl ester. A lipid anchor (S-farnesyl cysteine) is attached at Cys361. The propeptide at 362–364 (KQQ) is removed in mature form.

It belongs to the nucleosome assembly protein (NAP) family.

The protein resides in the nucleus. It is found in the cytoplasm. May modulate chromatin structure by regulation of nucleosome assembly/disassembly. This is Nucleosome assembly protein 1;2 (NAP1;2) from Oryza sativa subsp. japonica (Rice).